The following is a 330-amino-acid chain: Beta-ketoacyl-[acyl-carrier-protein] synthase III (330 aa).

Residues C118 and H257 contribute to the active site. Residues 258–262 (QANLR) form an ACP-binding region. N287 is a catalytic residue.

Belongs to the thiolase-like superfamily. FabH family. In terms of assembly, homodimer.

The protein localises to the cytoplasm. It catalyses the reaction malonyl-[ACP] + acetyl-CoA + H(+) = 3-oxobutanoyl-[ACP] + CO2 + CoA. The protein operates within lipid metabolism; fatty acid biosynthesis. In terms of biological role, catalyzes the condensation reaction of fatty acid synthesis by the addition to an acyl acceptor of two carbons from malonyl-ACP. Catalyzes the first condensation reaction which initiates fatty acid synthesis and may therefore play a role in governing the total rate of fatty acid production. Possesses both acetoacetyl-ACP synthase and acetyl transacylase activities. Its substrate specificity determines the biosynthesis of branched-chain and/or straight-chain of fatty acids. The polypeptide is Beta-ketoacyl-[acyl-carrier-protein] synthase III (Nitratidesulfovibrio vulgaris (strain DSM 19637 / Miyazaki F) (Desulfovibrio vulgaris)).